The sequence spans 172 residues: Myosin regulatory light chain 2, smooth muscle major isoform (172 aa).

Over residues 1 to 16 the composition is skewed to basic residues; sequence MSSKRAKAKTTKKRPQ. The tract at residues 1–20 is disordered; sequence MSSKRAKAKTTKKRPQRATS. Position 2 is an N-acetylserine (serine 2). EF-hand domains follow at residues 29-64, 98-133, and 134-169; these read SQIQEFKEAFNMIDQNRDGFIDKEDLHDMLASMGKN, DPEDVIRNAFACFDEEASGFIHEDHLRELLTTMGDR, and FTDEEVDEMYREAPIDKKGNFNYVEFTRILKHGAKD. Ca(2+) contacts are provided by aspartate 42, asparagine 44, aspartate 46, and aspartate 53.

Myosin is a hexamer of 2 heavy chains and 4 light chains.

Its function is as follows. Myosin regulatory subunit that plays an important role in regulation of both smooth muscle and nonmuscle cell contractile activity. Implicated in cytokinesis, receptor capping, and cell locomotion. The protein is Myosin regulatory light chain 2, smooth muscle major isoform of Gallus gallus (Chicken).